We begin with the raw amino-acid sequence, 120 residues long: Small ribosomal subunit protein uS13 (120 aa).

A disordered region spans residues 93 to 120 (RKGLPVRGQTTKNNARTRKGKKKTVGSK). Positions 107–120 (ARTRKGKKKTVGSK) are enriched in basic residues.

The protein belongs to the universal ribosomal protein uS13 family. In terms of assembly, part of the 30S ribosomal subunit. Forms a loose heterodimer with protein S19. Forms two bridges to the 50S subunit in the 70S ribosome.

Its function is as follows. Located at the top of the head of the 30S subunit, it contacts several helices of the 16S rRNA. In the 70S ribosome it contacts the 23S rRNA (bridge B1a) and protein L5 of the 50S subunit (bridge B1b), connecting the 2 subunits; these bridges are implicated in subunit movement. Contacts the tRNAs in the A and P-sites. The protein is Small ribosomal subunit protein uS13 of Helicobacter acinonychis (strain Sheeba).